A 199-amino-acid chain; its full sequence is TATA-box-binding protein (199 aa).

Tandem repeats lie at residues 10-86 (IENI…VKLL) and 101-177 (VQNI…YNQL).

It belongs to the TBP family.

Its function is as follows. General factor that plays a role in the activation of archaeal genes transcribed by RNA polymerase. Binds specifically to the TATA box promoter element which lies close to the position of transcription initiation. The sequence is that of TATA-box-binding protein from Pyrobaculum islandicum (strain DSM 4184 / JCM 9189 / GEO3).